The following is a 288-amino-acid chain: Bifunctional protein FolD (288 aa).

Residues Gly-164–Ser-166, Ser-193, and Ile-234 contribute to the NADP(+) site.

It belongs to the tetrahydrofolate dehydrogenase/cyclohydrolase family. As to quaternary structure, homodimer.

The catalysed reaction is (6R)-5,10-methylene-5,6,7,8-tetrahydrofolate + NADP(+) = (6R)-5,10-methenyltetrahydrofolate + NADPH. The enzyme catalyses (6R)-5,10-methenyltetrahydrofolate + H2O = (6R)-10-formyltetrahydrofolate + H(+). The protein operates within one-carbon metabolism; tetrahydrofolate interconversion. Catalyzes the oxidation of 5,10-methylenetetrahydrofolate to 5,10-methenyltetrahydrofolate and then the hydrolysis of 5,10-methenyltetrahydrofolate to 10-formyltetrahydrofolate. The chain is Bifunctional protein FolD from Nitratidesulfovibrio vulgaris (strain DSM 19637 / Miyazaki F) (Desulfovibrio vulgaris).